Consider the following 298-residue polypeptide: Aspartate carbamoyltransferase catalytic subunit (298 aa).

Residues arginine 50 and threonine 51 each coordinate carbamoyl phosphate. Residue lysine 79 participates in L-aspartate binding. 3 residues coordinate carbamoyl phosphate: arginine 100, histidine 128, and glutamine 131. L-aspartate contacts are provided by arginine 160 and arginine 221. Carbamoyl phosphate-binding residues include leucine 260 and proline 261.

The protein belongs to the aspartate/ornithine carbamoyltransferase superfamily. ATCase family. In terms of assembly, heterooligomer of catalytic and regulatory chains.

The catalysed reaction is carbamoyl phosphate + L-aspartate = N-carbamoyl-L-aspartate + phosphate + H(+). Its pathway is pyrimidine metabolism; UMP biosynthesis via de novo pathway; (S)-dihydroorotate from bicarbonate: step 2/3. Functionally, catalyzes the condensation of carbamoyl phosphate and aspartate to form carbamoyl aspartate and inorganic phosphate, the committed step in the de novo pyrimidine nucleotide biosynthesis pathway. This chain is Aspartate carbamoyltransferase catalytic subunit, found in Methanoculleus marisnigri (strain ATCC 35101 / DSM 1498 / JR1).